A 228-amino-acid polypeptide reads, in one-letter code: 2,3-bisphosphoglycerate-dependent phosphoglycerate mutase (228 aa).

Substrate-binding positions include 7–14 (RHGESAWN), 20–21 (TG), Arg59, 86–89 (ERHY), Lys97, 113–114 (RR), and 182–183 (GN). Catalysis depends on His8, which acts as the Tele-phosphohistidine intermediate. Glu86 serves as the catalytic Proton donor/acceptor.

It belongs to the phosphoglycerate mutase family. BPG-dependent PGAM subfamily.

The enzyme catalyses (2R)-2-phosphoglycerate = (2R)-3-phosphoglycerate. The protein operates within carbohydrate degradation; glycolysis; pyruvate from D-glyceraldehyde 3-phosphate: step 3/5. Its function is as follows. Catalyzes the interconversion of 2-phosphoglycerate and 3-phosphoglycerate. The protein is 2,3-bisphosphoglycerate-dependent phosphoglycerate mutase of Fusobacterium nucleatum subsp. nucleatum (strain ATCC 25586 / DSM 15643 / BCRC 10681 / CIP 101130 / JCM 8532 / KCTC 2640 / LMG 13131 / VPI 4355).